Here is a 154-residue protein sequence, read N- to C-terminus: Proline dehydrogenase transcriptional activator (154 aa).

The HTH asnC-type domain occupies 5 to 66 (IDATDRRILH…MLSPIRLGLI (62 aa)). Positions 24–43 (VTELARKVGLSKTPVAARIR) form a DNA-binding region, H-T-H motif.

Functionally, transcriptional activator of the putA gene in response to proline. The sequence is that of Proline dehydrogenase transcriptional activator (putR) from Rhodobacter capsulatus (Rhodopseudomonas capsulata).